The chain runs to 526 residues: Acid-sensing ion channel 1 (526 aa).

Over 1-49 the chain is Cytoplasmic; that stretch reads MELKTEEEEVGGVQPVSIQAFASSSTLHGLAHIFSYERLSLKRALWALC. The chain crosses the membrane as a helical span at residues 50–66; sequence FLGSLAVLLCVCTERVQ. The Extracellular portion of the chain corresponds to 67-425; sequence YYFCYHHVTK…ETIEQKKAYE (359 aa). 7 disulfides stabilise this stretch: C93/C194, C172/C179, C290/C365, C308/C361, C312/C359, C321/C343, and C323/C335. N366 and N393 each carry an N-linked (GlcNAc...) asparagine glycan. Residues 426–456 form a discontinuously helical membrane-spanning segment; that stretch reads IAGLLGDIGGQMGLFIGASILTVLELFDYAY. Residues 442 to 444 carry the GAS motif; ion selectivity filter motif; that stretch reads GAS. Over 457–526 the chain is Cytoplasmic; that stretch reads EVIKHRLCRR…ARGTFEDFTC (70 aa). Phosphoserine; by PKA is present on S477. Position 497 is a phosphoserine (S497).

Belongs to the amiloride-sensitive sodium channel (TC 1.A.6) family. ASIC1 subfamily. As to quaternary structure, homotrimer. Heterotrimer; with other ASIC proteins producing channel with different properties. Interacts with PICK1; regulates ASIC1 clustering in membranes. Interacts with STOM; alters heterotrimeric ASIC channels activity. In terms of processing, pH-gating could be regulated by serine proteases. Phosphorylation by PKA regulates interaction with PICK1 and subcellular localization. Phosphorylation by PKC may regulate the channel. Expressed in brain areas receiving strong excitatory corticofugal input. In hippocampus, expressed in the hilus of the dentate gyrus. In the cerebral cortex expressed in anterior and posterior cingulate cortex, sensory and motor cortices. In the sensory cortex strongest expression is detected in the whisker barrel field. In sensorimotor and cingulate cortex expression is elevated in layer III. Also expressed in basal ganglia, striatum, ventral pallidum, olfactory tubercle, and nucleus accumbens. Weakly expressed in thalamus with the exception of the habenula and the medial septal nuclei. In olfactory bulb, preferentially expressed in the glomerular layer, within glomeruli. Expressed in cerebellum in the molecular and granule cell layers. Strongly expressed in amygdala complex, particularly in the lateral and basolateral nuclei. Isoform 1 is more abundant in brain compared to isoform 2 (at protein level). Expressed in the nodose ganglion and dorsal root ganglion. Expressed in dendritic spine cells.

The protein resides in the cell membrane. The protein localises to the postsynaptic cell membrane. It localises to the cell projection. It is found in the dendrite. The enzyme catalyses Na(+)(in) = Na(+)(out). It catalyses the reaction Ca(2+)(in) = Ca(2+)(out). The catalysed reaction is K(+)(in) = K(+)(out). It carries out the reaction Li(+)(in) = Li(+)(out). With respect to regulation, inhibited by the diuretic drug amiloride. The activity of the channel is sensitive to rapid decrease in osmotic pressure. Forms voltage-independent, pH-gated trimeric sodium channels that act as postsynaptic excitatory receptors in the nervous system, playing a crucial role in regulating synaptic plasticity, learning, and memory. Upon extracellular pH drop this channel elicits transient, fast activating, and completely desensitizing inward currents. Displays high selectivity for sodium ions but can also permit the permeation of other cations. Regulates more or less directly intracellular calcium concentration and CaMKII phosphorylation, and thereby the density of dendritic spines. Modulates neuronal activity in the circuits underlying innate fear. Its function is as follows. Has high selectivity for sodium ions but is also potentially permeable to other cations including potassium. Could function in cochlear mechanoelectrical transduction. In Mus musculus (Mouse), this protein is Acid-sensing ion channel 1.